Reading from the N-terminus, the 217-residue chain is Glycine betaine/carnitine/choline transport system permease protein OpuCB (217 aa).

Positions 19 to 198 (TGEHLYISLI…ILAIIIDYVL (180 aa)) constitute an ABC transmembrane type-1 domain. A run of 6 helical transmembrane segments spans residues 23–43 (LYIS…LGVA), 52–74 (GAVI…AFFI), 84–101 (AIVA…RNTY), 128–148 (LVEI…STIY), 150–170 (IGWA…YIFI), and 180–200 (IIGG…VLAV).

The protein belongs to the binding-protein-dependent transport system permease family. CysTW subfamily. The complex is composed of two ATP-binding proteins (OpuCA), two transmembrane proteins (OpuCB and OpuCD) and a solute-binding protein (OpuCC).

The protein localises to the cell membrane. Its function is as follows. Involved in a high affinity multicomponent binding-protein-dependent transport system for glycine betaine, carnitine and choline; probably responsible for the translocation of the substrate across the membrane. The polypeptide is Glycine betaine/carnitine/choline transport system permease protein OpuCB (opuCB) (Bacillus subtilis (strain 168)).